A 187-amino-acid chain; its full sequence is Oligoribonuclease (187 aa).

The Exonuclease domain maps to 7 to 170; sequence LCWLDMEMTG…DDILESIEEM (164 aa). The active site involves tyrosine 128.

Belongs to the oligoribonuclease family.

Its subcellular location is the cytoplasm. In terms of biological role, 3'-to-5' exoribonuclease specific for small oligoribonucleotides. This chain is Oligoribonuclease, found in Neisseria meningitidis serogroup B (strain ATCC BAA-335 / MC58).